The chain runs to 555 residues: Disabled homolog 1 (555 aa).

Positions 1–26 (MSTETELQVAVKTSAKKDSRKKGQDR) are disordered. A compositionally biased stretch (basic and acidic residues) spans 15-26 (AKKDSRKKGQDR). A PID domain is found at 36-189 (KGEGVRYKAK…CEQAVYQTIL (154 aa)). A phosphotyrosine mark is found at Y198, Y220, and Y232. Disordered stretches follow at residues 384–410 (LTPL…RQKM), 418–437 (FQMA…PSLT), and 468–555 (NLTP…QAGS). The span at 391-403 (PGTSDSTRPSPQT) shows a compositional bias: polar residues. Low complexity-rich tracts occupy residues 470-479 (TPVTSTTPST) and 487-501 (PRQS…SHAS). S491 carries the phosphoserine; by CDK5 modification. Positions 504-513 (TTDDIFEEGF) are enriched in acidic residues.

Associates with the SH2 domains of SRC, FYN and ABL. Interacts (phosphorylated on tyrosine residues) with CRK and CRKL (via respective SH2 domain). Interacts with DAB2IP, SIAH1, LRP8 and VLDLR. Interacts with LRP1. Interacts with APLP1 (via NPXY motif). Interacts with DAB2IP. Interacts with ZSWIM8. In terms of processing, phosphorylated by FYN on Tyr-198 and Tyr-220 upon reelin induction in embryonic neurons. Also phosphorylated on Ser-491 independently of reelin signaling. Post-translationally, ubiquitinated by various cullin-5-RING E3 ubiquitin-protein ligase complexes (ECS complexes) following ligand-binding and phosphorylation, leading to its degradation. Ubiquitinated by the ECS(SOCS7) complex in the cortical plate of the developing cerebral cortex following ligand-binding and phosphorylation by FYN, leading to its degradation by the proteasome. Recognized by ZSWIM8 through a disorder targets misorder mechanism that eliminates misfolded DAB1 via ubiquitination and proteasomal degradation.

Its subcellular location is the cytoplasm. In terms of biological role, signaling adapter of the reelin-mediated signaling pathway, which regulates the migration and differentiation of postmitotic neurons during brain development. Mediates intracellular transduction of Reelin signaling following reelin (RELN)-binding to its receptor: acts by docking proteins through its phosphotyrosine residues and PID domain. The chain is Disabled homolog 1 (DAB1) from Macaca fascicularis (Crab-eating macaque).